We begin with the raw amino-acid sequence, 311 residues long: GPN-loop GTPase 2 (311 aa).

20-25 (GSGKTT) serves as a coordination point for GTP. A Gly-Pro-Asn (GPN)-loop; involved in dimer interface motif is present at residues 77–79 (GPN). 179 to 182 (SKMD) is a GTP binding site.

Belongs to the GPN-loop GTPase family. In terms of assembly, heterodimers with gpn1 or gpn3. Binds to RNA polymerase II (RNAPII).

Functionally, small GTPase required for proper localization of RNA polymerase II and III (RNAPII and RNAPIII). May act at an RNAP assembly step prior to nuclear import. The polypeptide is GPN-loop GTPase 2 (Danio rerio (Zebrafish)).